The following is a 314-amino-acid chain: 4-hydroxy-3-methylbut-2-enyl diphosphate reductase (314 aa).

Cys-12 provides a ligand contact to [4Fe-4S] cluster. Residues His-43 and His-81 each contribute to the (2E)-4-hydroxy-3-methylbut-2-enyl diphosphate site. Positions 43 and 81 each coordinate dimethylallyl diphosphate. Isopentenyl diphosphate-binding residues include His-43 and His-81. A [4Fe-4S] cluster-binding site is contributed by Cys-103. His-131 is a (2E)-4-hydroxy-3-methylbut-2-enyl diphosphate binding site. Residue His-131 participates in dimethylallyl diphosphate binding. His-131 is a binding site for isopentenyl diphosphate. Glu-133 (proton donor) is an active-site residue. Thr-170 is a (2E)-4-hydroxy-3-methylbut-2-enyl diphosphate binding site. Cys-198 provides a ligand contact to [4Fe-4S] cluster. (2E)-4-hydroxy-3-methylbut-2-enyl diphosphate-binding residues include Ser-226, Asn-228, and Ser-271. Positions 226, 228, and 271 each coordinate dimethylallyl diphosphate. Ser-226, Asn-228, and Ser-271 together coordinate isopentenyl diphosphate.

The protein belongs to the IspH family. [4Fe-4S] cluster is required as a cofactor.

The enzyme catalyses isopentenyl diphosphate + 2 oxidized [2Fe-2S]-[ferredoxin] + H2O = (2E)-4-hydroxy-3-methylbut-2-enyl diphosphate + 2 reduced [2Fe-2S]-[ferredoxin] + 2 H(+). It catalyses the reaction dimethylallyl diphosphate + 2 oxidized [2Fe-2S]-[ferredoxin] + H2O = (2E)-4-hydroxy-3-methylbut-2-enyl diphosphate + 2 reduced [2Fe-2S]-[ferredoxin] + 2 H(+). It participates in isoprenoid biosynthesis; dimethylallyl diphosphate biosynthesis; dimethylallyl diphosphate from (2E)-4-hydroxy-3-methylbutenyl diphosphate: step 1/1. The protein operates within isoprenoid biosynthesis; isopentenyl diphosphate biosynthesis via DXP pathway; isopentenyl diphosphate from 1-deoxy-D-xylulose 5-phosphate: step 6/6. Catalyzes the conversion of 1-hydroxy-2-methyl-2-(E)-butenyl 4-diphosphate (HMBPP) into a mixture of isopentenyl diphosphate (IPP) and dimethylallyl diphosphate (DMAPP). Acts in the terminal step of the DOXP/MEP pathway for isoprenoid precursor biosynthesis. This chain is 4-hydroxy-3-methylbut-2-enyl diphosphate reductase, found in Bacillus velezensis (strain DSM 23117 / BGSC 10A6 / LMG 26770 / FZB42) (Bacillus amyloliquefaciens subsp. plantarum).